A 427-amino-acid polypeptide reads, in one-letter code: Gamma-glutamyl phosphate reductase (427 aa).

It belongs to the gamma-glutamyl phosphate reductase family.

It is found in the cytoplasm. It catalyses the reaction L-glutamate 5-semialdehyde + phosphate + NADP(+) = L-glutamyl 5-phosphate + NADPH + H(+). It functions in the pathway amino-acid biosynthesis; L-proline biosynthesis; L-glutamate 5-semialdehyde from L-glutamate: step 2/2. Catalyzes the NADPH-dependent reduction of L-glutamate 5-phosphate into L-glutamate 5-semialdehyde and phosphate. The product spontaneously undergoes cyclization to form 1-pyrroline-5-carboxylate. This Bifidobacterium adolescentis (strain ATCC 15703 / DSM 20083 / NCTC 11814 / E194a) protein is Gamma-glutamyl phosphate reductase.